The sequence spans 525 residues: GMP synthase [glutamine-hydrolyzing] (525 aa).

The 200-residue stretch at 8–207 folds into the Glutamine amidotransferase type-1 domain; that stretch reads KILILDFGSQ…ALDICGCDAN (200 aa). The Nucleophile role is filled by cysteine 85. Active-site residues include histidine 181 and glutamate 183. Positions 208-400 constitute a GMPS ATP-PPase domain; that stretch reads WKPSSIIEDA…LGLPYDMLYR (193 aa). Residue 235–241 coordinates ATP; that stretch reads SGGVDSS.

As to quaternary structure, homodimer.

The enzyme catalyses XMP + L-glutamine + ATP + H2O = GMP + L-glutamate + AMP + diphosphate + 2 H(+). It functions in the pathway purine metabolism; GMP biosynthesis; GMP from XMP (L-Gln route): step 1/1. In terms of biological role, catalyzes the synthesis of GMP from XMP. This is GMP synthase [glutamine-hydrolyzing] from Shewanella piezotolerans (strain WP3 / JCM 13877).